A 57-amino-acid polypeptide reads, in one-letter code: Protein GnsA (57 aa).

This sequence belongs to the gns family.

This is Protein GnsA (gnsA) from Escherichia coli O6:H1 (strain CFT073 / ATCC 700928 / UPEC).